The following is a 178-amino-acid chain: Ribosome maturation factor RimM (178 aa).

Residues 100–178 (DEGEFYWHQL…EIRVDWDADF (79 aa)) form the PRC barrel domain.

It belongs to the RimM family. In terms of assembly, binds ribosomal protein uS19.

The protein resides in the cytoplasm. An accessory protein needed during the final step in the assembly of 30S ribosomal subunit, possibly for assembly of the head region. Essential for efficient processing of 16S rRNA. May be needed both before and after RbfA during the maturation of 16S rRNA. It has affinity for free ribosomal 30S subunits but not for 70S ribosomes. The chain is Ribosome maturation factor RimM from Azotobacter vinelandii (strain DJ / ATCC BAA-1303).